A 212-amino-acid chain; its full sequence is tRNA (guanine-N(7)-)-methyltransferase (212 aa).

Glu-44, Asp-69, Asp-96, and Asp-118 together coordinate S-adenosyl-L-methionine. The active site involves Asp-118. Lys-122 contributes to the substrate binding site. Residues 124–129 (RHEKRR) are interaction with RNA. Substrate-binding positions include Asp-154 and 191 to 194 (TEYE).

This sequence belongs to the class I-like SAM-binding methyltransferase superfamily. TrmB family.

The enzyme catalyses guanosine(46) in tRNA + S-adenosyl-L-methionine = N(7)-methylguanosine(46) in tRNA + S-adenosyl-L-homocysteine. It participates in tRNA modification; N(7)-methylguanine-tRNA biosynthesis. Its function is as follows. Catalyzes the formation of N(7)-methylguanine at position 46 (m7G46) in tRNA. The polypeptide is tRNA (guanine-N(7)-)-methyltransferase (Streptococcus suis (strain 05ZYH33)).